A 385-amino-acid polypeptide reads, in one-letter code: 1-deoxy-D-xylulose 5-phosphate reductoisomerase (385 aa).

The NADPH site is built by Thr13, Gly14, Ser15, Ile16, Asn40, and Asn122. Residue Lys123 participates in 1-deoxy-D-xylulose 5-phosphate binding. Glu124 lines the NADPH pocket. Asp148 provides a ligand contact to Mn(2+). The 1-deoxy-D-xylulose 5-phosphate site is built by Ser149, Glu150, Ser177, and His200. Mn(2+) is bound at residue Glu150. Gly206 lines the NADPH pocket. 4 residues coordinate 1-deoxy-D-xylulose 5-phosphate: Ser213, Asn218, Lys219, and Glu222. Glu222 provides a ligand contact to Mn(2+).

The protein belongs to the DXR family. Mg(2+) is required as a cofactor. Requires Mn(2+) as cofactor.

The catalysed reaction is 2-C-methyl-D-erythritol 4-phosphate + NADP(+) = 1-deoxy-D-xylulose 5-phosphate + NADPH + H(+). It participates in isoprenoid biosynthesis; isopentenyl diphosphate biosynthesis via DXP pathway; isopentenyl diphosphate from 1-deoxy-D-xylulose 5-phosphate: step 1/6. In terms of biological role, catalyzes the NADPH-dependent rearrangement and reduction of 1-deoxy-D-xylulose-5-phosphate (DXP) to 2-C-methyl-D-erythritol 4-phosphate (MEP). The sequence is that of 1-deoxy-D-xylulose 5-phosphate reductoisomerase from Francisella tularensis subsp. novicida (strain U112).